The sequence spans 348 residues: Peptide-N(4)-(N-acetyl-beta-glucosaminyl)asparagine amidase (348 aa).

Zn(2+)-binding residues include C116, C119, C151, and C154. C177 serves as the catalytic Nucleophile. Catalysis depends on residues H204 and D221. E224 contacts substrate. The interval 311-348 (PSATPTKEMQKLKISKTGNKGRISGSAEWKESRGENGK) is disordered. The span at 338–348 (EWKESRGENGK) shows a compositional bias: basic and acidic residues.

This sequence belongs to the transglutaminase-like superfamily. PNGase family. Zn(2+) is required as a cofactor.

It localises to the cytoplasm. The enzyme catalyses Hydrolysis of an N(4)-(acetyl-beta-D-glucosaminyl)asparagine residue in which the glucosamine residue may be further glycosylated, to yield a (substituted) N-acetyl-beta-D-glucosaminylamine and a peptide containing an aspartate residue.. Functionally, specifically deglycosylates the denatured form of N-linked glycoproteins in the cytoplasm and assists their proteasome-mediated degradation. Cleaves the beta-aspartyl-glucosamine (GlcNAc) of the glycan and the amide side chain of Asn, converting Asn to Asp. Prefers proteins containing high-mannose over those bearing complex type oligosaccharides. Can recognize misfolded proteins in the endoplasmic reticulum that are exported to the cytosol to be destroyed and deglycosylate them, while it has no activity toward native proteins. Deglycosylation is a prerequisite for subsequent proteasome-mediated degradation of some, but not all, misfolded glycoproteins. In Candida glabrata (strain ATCC 2001 / BCRC 20586 / JCM 3761 / NBRC 0622 / NRRL Y-65 / CBS 138) (Yeast), this protein is Peptide-N(4)-(N-acetyl-beta-glucosaminyl)asparagine amidase (PNG1).